The chain runs to 267 residues: Phosphoinositide-3-kinase-interacting protein 1 (267 aa).

The first 21 residues, 1-21 (MLLAWVHTFLLSNMLLAEAYG), serve as a signal peptide directing secretion. At 22-172 (SGGCFWDNGH…NSKEKKDLGT (151 aa)) the chain is on the extracellular side. Residues 24–101 (GCFWDNGHLY…EKRPCEDLRC (78 aa)) enclose the Kringle domain. 3 cysteine pairs are disulfide-bonded: Cys25-Cys101, Cys46-Cys82, and Cys70-Cys96. Residues 91 to 101 (PEKRPCEDLRC) show a composition bias toward basic and acidic residues. The segment at 91–122 (PEKRPCEDLRCPETTSQAPPPPPPSSTTELEE) is disordered. A helical transmembrane segment spans residues 173 to 193 (LGYVLGVTMTVIIIAIGVGIV). Residues 194–267 (LGYTYKRGKD…LTDQAGTPGA (74 aa)) lie on the Cytoplasmic side of the membrane.

The protein resides in the cell membrane. In terms of biological role, negative regulator of hepatic phosphatidylinositol 3-kinase (PI3K) activity. The polypeptide is Phosphoinositide-3-kinase-interacting protein 1 (Pik3ip1) (Rattus norvegicus (Rat)).